The primary structure comprises 207 residues: MNPSRIRIKMCGMTRSEDIQCAIDLGVDAIGLIFYPKSARNVSLEKARIIVNNIPPFVDIVAVLVNPEQSFVQLIINEIPVQLLQFHGEESSEFCRQFNKPFIKAIHPKTAIQIQSAVDEFFDASAILLDTPSDKERGGTGLTFDWNIIPENLSKPYILAGGLNESNILEAITMCHPYAVDVCSGIEASPGVKDHLKMSRFIKAIWG.

Belongs to the TrpF family.

The enzyme catalyses N-(5-phospho-beta-D-ribosyl)anthranilate = 1-(2-carboxyphenylamino)-1-deoxy-D-ribulose 5-phosphate. It participates in amino-acid biosynthesis; L-tryptophan biosynthesis; L-tryptophan from chorismate: step 3/5. In Legionella pneumophila (strain Corby), this protein is N-(5'-phosphoribosyl)anthranilate isomerase.